The chain runs to 362 residues: Histidine biosynthesis bifunctional protein HisB (362 aa).

Positions Met-1 to Pro-173 are histidinol-phosphatase. The Nucleophile role is filled by Asp-8. Positions 8 and 10 each coordinate Mg(2+). The active-site Proton donor is the Asp-10. Zn(2+)-binding residues include Cys-91, His-93, Cys-99, and Cys-101. Residue Asp-128 participates in Mg(2+) binding. An imidazoleglycerol-phosphate dehydratase region spans residues Arg-174–Leu-362.

The protein in the N-terminal section; belongs to the histidinol-phosphatase family. It in the C-terminal section; belongs to the imidazoleglycerol-phosphate dehydratase family. The cofactor is Mg(2+). It depends on Zn(2+) as a cofactor.

The protein localises to the cytoplasm. The catalysed reaction is D-erythro-1-(imidazol-4-yl)glycerol 3-phosphate = 3-(imidazol-4-yl)-2-oxopropyl phosphate + H2O. It catalyses the reaction L-histidinol phosphate + H2O = L-histidinol + phosphate. It participates in amino-acid biosynthesis; L-histidine biosynthesis; L-histidine from 5-phospho-alpha-D-ribose 1-diphosphate: step 6/9. Its pathway is amino-acid biosynthesis; L-histidine biosynthesis; L-histidine from 5-phospho-alpha-D-ribose 1-diphosphate: step 8/9. This chain is Histidine biosynthesis bifunctional protein HisB, found in Haemophilus influenzae (strain 86-028NP).